Consider the following 185-residue polypeptide: Ribosome-recycling factor (185 aa).

This sequence belongs to the RRF family.

The protein localises to the cytoplasm. Its function is as follows. Responsible for the release of ribosomes from messenger RNA at the termination of protein biosynthesis. May increase the efficiency of translation by recycling ribosomes from one round of translation to another. The polypeptide is Ribosome-recycling factor (Streptococcus equi subsp. equi (strain 4047)).